Reading from the N-terminus, the 87-residue chain is Small ribosomal subunit protein uS17 (87 aa).

The protein belongs to the universal ribosomal protein uS17 family. In terms of assembly, part of the 30S ribosomal subunit.

One of the primary rRNA binding proteins, it binds specifically to the 5'-end of 16S ribosomal RNA. The polypeptide is Small ribosomal subunit protein uS17 (Staphylococcus aureus (strain JH1)).